Here is a 446-residue protein sequence, read N- to C-terminus: Tryptophan dimethylallyltransferase (446 aa).

Residues 83–84 (IL) and glutamate 92 each bind L-tryptophan. Substrate is bound by residues arginine 103, lysine 189, and tyrosine 191. Tyrosine 193 and arginine 246 together coordinate L-tryptophan. Residues arginine 259, lysine 261, tyrosine 263, glutamine 345, and tyrosine 347 each contribute to the substrate site.

Belongs to the tryptophan dimethylallyltransferase family. In terms of assembly, homodimer.

The catalysed reaction is L-tryptophan + dimethylallyl diphosphate = 4-(3-methylbut-2-enyl)-L-tryptophan + diphosphate. The protein operates within alkaloid biosynthesis; ergot alkaloid biosynthesis. Its function is as follows. Tryptophan dimethylallyltransferase; part of the gene cluster that mediates the biosynthesis of fungal ergot alkaloid. DmaW catalyzes the first step of ergot alkaloid biosynthesis by condensing dimethylallyl diphosphate (DMAP) and tryptophan to form 4-dimethylallyl-L-tryptophan. The second step is catalyzed by the methyltransferase easF that methylates 4-dimethylallyl-L-tryptophan in the presence of S-adenosyl-L-methionine, resulting in the formation of 4-dimethylallyl-L-abrine. The catalase easC and the FAD-dependent oxidoreductase easE then transform 4-dimethylallyl-L-abrine to chanoclavine-I which is further oxidized by easD in the presence of NAD(+), resulting in the formation of chanoclavine-I aldehyde. Chanoclavine-I aldehyde is the precursor of ergoamides and ergopeptines in Clavicipitaceae, and clavine-type alcaloids such as fumiclavine in Trichocomaceae. However, the metabolites downstream of chanoclavine-I aldehyde in Arthrodermataceae have not been identified yet. The polypeptide is Tryptophan dimethylallyltransferase (Arthroderma otae (strain ATCC MYA-4605 / CBS 113480) (Microsporum canis)).